A 509-amino-acid chain; its full sequence is Midnolin (509 aa).

The span at 1 to 12 shows a compositional bias: polar residues; that stretch reads MDQHPSARSCSS. The segment at 1-27 is disordered; sequence MDQHPSARSCSSRGAAPSCESVSGEPP. The region spanning 28–102 is the Ubiquitin-like domain; that stretch reads MNLYIHSTTG…LTLVPTVEAG (75 aa). Disordered stretches follow at residues 172-295, 370-404, and 448-485; these read GSSE…NTPL, QCTS…ETQP, and KRLR…EGSL. Positions 176-190 are enriched in low complexity; sequence GTTGLSHGASGSASG. The span at 196 to 209 shows a compositional bias: basic residues; the sequence is HNPHPHHPHQHPHH. A compositionally biased stretch (pro residues) spans 220–231; that stretch reads AFPPSPSIPSIP. Positions 261–285 are enriched in low complexity; sequence PSSACAPSPSSPSPAASCPEASCSA. A compositionally biased stretch (polar residues) spans 286–295; sequence KTSGNCNTPL. Residues 376–386 are compositionally biased toward pro residues; it reads SPAPSPPPSPP. Residues 387–400 are compositionally biased toward low complexity; it reads HTTGLTGLPTTVPS.

It localises to the nucleus. The protein resides in the cytoplasm. It is found in the cytosol. Its subcellular location is the nucleolus. Functionally, facilitates ubiquitin-independent proteasomal degradation of polycomb protein CBX4. Plays a role in inhibiting the activity of glucokinase GCK and both glucose-induced and basal insulin secretion. The protein is Midnolin (midn) of Danio rerio (Zebrafish).